The following is a 143-amino-acid chain: Large ribosomal subunit protein uL11 (143 aa).

It belongs to the universal ribosomal protein uL11 family. As to quaternary structure, part of the ribosomal stalk of the 50S ribosomal subunit. Interacts with L10 and the large rRNA to form the base of the stalk. L10 forms an elongated spine to which L12 dimers bind in a sequential fashion forming a multimeric L10(L12)X complex. In terms of processing, one or more lysine residues are methylated.

Its function is as follows. Forms part of the ribosomal stalk which helps the ribosome interact with GTP-bound translation factors. This Caulobacter sp. (strain K31) protein is Large ribosomal subunit protein uL11.